An 804-amino-acid chain; its full sequence is MKFTLSWLKDHLETDASLDEICDKLTAIGLEVDHVDDRSYLKGFVIAKVLTAIKHPDADKLQILSVDTGADKPVQVICGAPNARAGLVGVLALPGTYVPGLDVTLSVGKIRGIESFGMMCSWAELELSNEHDGIIELPEDVPIGASFAVYAGLDDPVIDIGLTPNRSDCTGVRGIARDLAATGIGRLKELSLPQLGTTFETSLDVSLDFSQSALLCLGFAWCEVRNVQNNASPQWMQQRLNAIGLRPINALVDITNYISFDLGRPLHVFDADKIKGNLRVRCGREGEQLQALNGKVYNLGVKDCVIADEEGVVSIAGIMGGERTSCDETTRRVIIESALWDAQSIAQTGRALGLISDARYRFERGVDPAFMETGLEIATELVLRLCGGEGSKMKIVGYQQPEIRQITFPLSEIKRLTYLEIEHEQTMTILTQLGFDSEGQGNVVVVKVPTWRPDIVGKADLVEEVMRIYGLDKIKPIPLESFMEVKDPVLTVSQLRSRITRFALAGRGMRETVTWSFISEKQALAFGGGQAQLKLVNPISADMSVMRPSLLPGLLVAAQRNADRGFPDFALFEVSNIYEDDTPDKQHRVAGGIRRGTEQFGGAGRFWNGNARAVDVFDAKADALAVLEACGLESGKVQIEVGAPDWYHPGRSGVIKLGSKIILGFFGVFHPATLEKLDISGPLCGFEIFLDRIPEPKKKATKSRSPLKLSSLQMVRRDFAFVVDKMVDSSLIVRAASGADKKLIHSVQVFDVFEDLSLGEEKKSVAIEVALQPIERTLTDEDIEELALKLVENVTRMTGASLRC.

Residues 38–148 (RSYLKGFVIA…EDVPIGASFA (111 aa)) enclose the tRNA-binding domain. The B5 domain maps to 401–476 (PEIRQITFPL…RIYGLDKIKP (76 aa)). Mg(2+) is bound by residues aspartate 454, aspartate 460, glutamate 463, and glutamate 464. An FDX-ACB domain is found at 710–803 (SSLQMVRRDF…VTRMTGASLR (94 aa)).

The protein belongs to the phenylalanyl-tRNA synthetase beta subunit family. Type 1 subfamily. As to quaternary structure, tetramer of two alpha and two beta subunits. Mg(2+) is required as a cofactor.

It is found in the cytoplasm. It carries out the reaction tRNA(Phe) + L-phenylalanine + ATP = L-phenylalanyl-tRNA(Phe) + AMP + diphosphate + H(+). This is Phenylalanine--tRNA ligase beta subunit from Bartonella henselae (strain ATCC 49882 / DSM 28221 / CCUG 30454 / Houston 1) (Rochalimaea henselae).